The primary structure comprises 215 residues: Jasmonate monooxygenase ABM (215 aa).

Positions 2 to 90 constitute an ABM domain; sequence FAVIFETRPQ…GVLEDYHLRV (89 aa).

It localises to the endoplasmic reticulum. Its subcellular location is the secreted. The enzyme catalyses jasmonate + NADPH + O2 + H(+) = (1R,2R)-12-hydroxyjasmonate + NADP(+) + H2O. In terms of biological role, monooxygenase that converts the endogenous (and likely the host) jasmonate (JA) to its hydroxylated derivative 12-hydroxyjasmonate (12OH-JA), also known as tuberonic acid, a compound that attenuates or disables jasmonate-based host innate immunity and which is essential for proper initiation and elaboration of the blast disease in rice. ABM, together with a polyketide synthase MGG_04775 and the esterase MGG_04774, share the secondary metabolism gene cluster with ABC transporter ABC3, and therefore may also be involved in the synthesis of other important metabolites such as the ABC3 transporter efflux substrate (ATS) and/or additional polyketides. The protein is Jasmonate monooxygenase ABM of Pyricularia oryzae (strain 70-15 / ATCC MYA-4617 / FGSC 8958) (Rice blast fungus).